Reading from the N-terminus, the 249-residue chain is Probable transcriptional regulatory protein IL1088 (249 aa).

It belongs to the TACO1 family.

It is found in the cytoplasm. The polypeptide is Probable transcriptional regulatory protein IL1088 (Idiomarina loihiensis (strain ATCC BAA-735 / DSM 15497 / L2-TR)).